The sequence spans 176 residues: UBA-like domain-containing protein 1 (176 aa).

The interval 87 to 176 (SESFHGGGGS…RAHPAMEAER (90 aa)) is disordered. The segment covering 120–137 (TPSWPTAASPPGGPQQHQ) has biased composition (low complexity). Positions 138–150 (PQPPLWTPAPPSP) are enriched in pro residues. Positions 166-176 (PRAHPAMEAER) are enriched in basic and acidic residues.

Belongs to the UBALD family.

The protein is UBA-like domain-containing protein 1 (Ubald1) of Mus musculus (Mouse).